The following is a 38-amino-acid chain: Defensin D7 (38 aa).

This sequence belongs to the DEFL family. Group IV subfamily. In terms of tissue distribution, distributed in the epidermal cell layer of leaves and in the subepidermal layer region of stems. Not in roots.

It is found in the secreted. It localises to the cell wall. Functionally, antimicrobial peptide. Active against Fusarium spp., Gram-positive and Gram-negative bacterial pathogens. The polypeptide is Defensin D7 (Spinacia oleracea (Spinach)).